The chain runs to 127 residues: Large ribosomal subunit protein bL12 (127 aa).

This sequence belongs to the bacterial ribosomal protein bL12 family. In terms of assembly, homodimer. Part of the ribosomal stalk of the 50S ribosomal subunit. Forms a multimeric L10(L12)X complex, where L10 forms an elongated spine to which 2 to 4 L12 dimers bind in a sequential fashion. Binds GTP-bound translation factors.

Its function is as follows. Forms part of the ribosomal stalk which helps the ribosome interact with GTP-bound translation factors. Is thus essential for accurate translation. The protein is Large ribosomal subunit protein bL12 of Caulobacter vibrioides (strain ATCC 19089 / CIP 103742 / CB 15) (Caulobacter crescentus).